The primary structure comprises 484 residues: Glutamate--tRNA ligase (484 aa).

The 'HIGH' region signature appears at 11–21 (PSPTGYLHIGN). Positions 252 to 256 (KLSKR) match the 'KMSKS' region motif. Position 255 (lysine 255) interacts with ATP.

Belongs to the class-I aminoacyl-tRNA synthetase family. Glutamate--tRNA ligase type 1 subfamily. Monomer.

Its subcellular location is the cytoplasm. The catalysed reaction is tRNA(Glu) + L-glutamate + ATP = L-glutamyl-tRNA(Glu) + AMP + diphosphate. In terms of biological role, catalyzes the attachment of glutamate to tRNA(Glu) in a two-step reaction: glutamate is first activated by ATP to form Glu-AMP and then transferred to the acceptor end of tRNA(Glu). The chain is Glutamate--tRNA ligase from Staphylococcus aureus (strain Newman).